A 127-amino-acid polypeptide reads, in one-letter code: ALK and LTK ligand 1 (127 aa).

Positions 1–27 are cleaved as a signal peptide; it reads MWLTKPSTPVSALLLLALALSPPGTQG. Disulfide bonds link C88-C124 and C102-C111.

The protein belongs to the ALKAL family.

The protein resides in the secreted. It is found in the cell membrane. Functionally, cytokine that acts as a physiological ligand for receptor tyrosine kinase LTK, leading to its activation. Monomeric ALKAL1 binds to LTK, leading to LTK homodimerization and activation. In contrast to ALKAL2, does not act as a potent physiological ligand for ALK. The chain is ALK and LTK ligand 1 from Mus musculus (Mouse).